The chain runs to 1161 residues: Translation initiation factor IF-2 (1161 aa).

Positions 67-561 (KSSFKAANEQ…RRAMELRAAK (495 aa)) are disordered. Residues 83–105 (QNKDSNSRSKPLNKEKPSKESLN) are compositionally biased toward basic and acidic residues. A compositionally biased stretch (polar residues) spans 139-154 (SRISNLQSQVLPNSHN). Composition is skewed to basic and acidic residues over residues 164–180 (NPNEKKNSTKIVQEKKS) and 211–220 (KDIKANKKND). 2 stretches are compositionally biased toward low complexity: residues 224–250 (NQRPQQANRLNNNNNFPKKNINNPRIK) and 268–282 (NSNRQNSNSRQPPSN). 3 stretches are compositionally biased toward polar residues: residues 295–311 (RQVTPNRPSNPNRQGVS), 352–362 (RQGAPNRQGSP), and 380–393 (LNRSGSKFNNQNPS). The segment covering 412–432 (ASDKEKLNRSNFEKQKVEPPK) has biased composition (basic and acidic residues). Positions 440 to 461 (SRLNASPTAKKTPHRSFTNNSK) are enriched in polar residues. 2 stretches are compositionally biased toward basic and acidic residues: residues 464–478 (GRSDWDDSAKLEALR) and 543–561 (KETTRQRQKRRAMELRAAK). Residues 653–830 (KRPPVITVMG…EVEDLQANPE (178 aa)) form the tr-type G domain. Positions 662 to 669 (GHVDHGKT) are G1. Position 662–669 (662–669 (GHVDHGKT)) interacts with GTP. Positions 687 to 691 (GITQH) are G2. A G3 region spans residues 712 to 715 (DTPG). GTP contacts are provided by residues 712–716 (DTPGH) and 766–769 (NKID). The tract at residues 766–769 (NKID) is G4. Residues 802-804 (SAI) are G5.

Belongs to the TRAFAC class translation factor GTPase superfamily. Classic translation factor GTPase family. IF-2 subfamily.

The protein resides in the cytoplasm. One of the essential components for the initiation of protein synthesis. Protects formylmethionyl-tRNA from spontaneous hydrolysis and promotes its binding to the 30S ribosomal subunits. Also involved in the hydrolysis of GTP during the formation of the 70S ribosomal complex. The chain is Translation initiation factor IF-2 from Prochlorococcus marinus (strain MIT 9515).